The following is a 201-amino-acid chain: MSRYRGPRFKKIRRLGALPGLTSKRPTVGSELRNQSRSTKKSQYRIRLEEKQKLRFHYGLTERQLLKYVRIAGKAKGSTGQVLLQLLEMRLDNILFRLGMASTIPQARQLVNHRHVFVNGHIVDIPSYRCKPQDIITAKDNKKSKTLIQNSLESAPREELPTHLTLQPFQYKGLVNQIIDSKWVGLKINELLVVEYYSRQT.

Residues 20–44 form a disordered region; sequence GLTSKRPTVGSELRNQSRSTKKSQY. An S4 RNA-binding domain is found at 89-150; the sequence is MRLDNILFRL…NKKSKTLIQN (62 aa).

This sequence belongs to the universal ribosomal protein uS4 family. As to quaternary structure, part of the 30S ribosomal subunit. Contacts protein S5. The interaction surface between S4 and S5 is involved in control of translational fidelity.

It localises to the plastid. It is found in the chloroplast. One of the primary rRNA binding proteins, it binds directly to 16S rRNA where it nucleates assembly of the body of the 30S subunit. Functionally, with S5 and S12 plays an important role in translational accuracy. The chain is Small ribosomal subunit protein uS4c (rps4) from Lotus japonicus (Lotus corniculatus var. japonicus).